The primary structure comprises 312 residues: Olfactory receptor 2M5 (312 aa).

At 1 to 25 (MAWENQTFNSDFILLGIFNHSPTHT) the chain is on the extracellular side. The N-linked (GlcNAc...) asparagine glycan is linked to Asn5. A helical transmembrane segment spans residues 26 to 49 (FLFFLVLAIFSVAFMGNSVMVLLI). Residues 50–57 (YLDTQLHT) lie on the Cytoplasmic side of the membrane. The chain crosses the membrane as a helical span at residues 58–79 (PMYFLLSQLFLMDLMLICSTVP). Residues 80–100 (KMAFNYLSGSKSISMAGCATQ) lie on the Extracellular side of the membrane. An intrachain disulfide couples Cys97 to Cys189. Residues 101-120 (IFFYVSLLGSECFLLAVMSY) traverse the membrane as a helical segment. The Cytoplasmic segment spans residues 121–139 (DRYIAICHPLRYTNLMRPK). Residues 140 to 158 (ICGLMTAFSWILGSMDAII) form a helical membrane-spanning segment. Residues 159–195 (DAVATFSFSYCGSREIAHFFCDFPSLLILSCNDTSIF) lie on the Extracellular side of the membrane. Residues 196-219 (EKVLFICCIVMIVFPVAIIIASYA) traverse the membrane as a helical segment. At 220-236 (RVILAVIHMGSGEGRRK) the chain is on the cytoplasmic side. Residues 237 to 259 (AFTTCSSHLMVVGMYYGAGLFMY) traverse the membrane as a helical segment. Over 260–272 (IRPTSDRSPMQDK) the chain is Extracellular. A helical transmembrane segment spans residues 273 to 292 (LVSVFYTILTPMLNPLIYSL). Over 293 to 311 (RNKEVTRALRKVLGKGKCG) the chain is Cytoplasmic.

This sequence belongs to the G-protein coupled receptor 1 family.

The protein localises to the cell membrane. In terms of biological role, odorant receptor. This Homo sapiens (Human) protein is Olfactory receptor 2M5 (OR2M5).